Here is a 711-residue protein sequence, read N- to C-terminus: Polyribonucleotide nucleotidyltransferase (711 aa).

The Mg(2+) site is built by Asp-486 and Asp-492. Residues 553–612 (PRIHTIKINPDKIKDVIGKGGSVIRALTEETGTTIEIEDDGTVKIAATDGEKAKHAIRRI) enclose the KH domain. Residues 622-690 (GRVYTGKVTR…RQGRIRLSIK (69 aa)) enclose the S1 motif domain. The interval 689-711 (IKEATEQSQPAAAPEAPAAEQGE) is disordered. A compositionally biased stretch (low complexity) spans 694–711 (EQSQPAAAPEAPAAEQGE).

It belongs to the polyribonucleotide nucleotidyltransferase family. Component of the RNA degradosome, which is a multiprotein complex involved in RNA processing and mRNA degradation. Mg(2+) is required as a cofactor.

The protein resides in the cytoplasm. The catalysed reaction is RNA(n+1) + phosphate = RNA(n) + a ribonucleoside 5'-diphosphate. Involved in mRNA degradation. Catalyzes the phosphorolysis of single-stranded polyribonucleotides processively in the 3'- to 5'-direction. In Shigella flexneri serotype 5b (strain 8401), this protein is Polyribonucleotide nucleotidyltransferase.